Consider the following 30-residue polypeptide: GLKDWVKIAGGWLKKKGPGILKAAMAAATQ.

In terms of tissue distribution, expressed by the venom gland.

The protein resides in the secreted. In terms of biological role, has activity against some Gram-positive bacteria and S.cerevisiae. Has a non-hemolytic activity. The polypeptide is U1-poneritoxin-Ng3e (Neoponera goeldii (Ponerine ant)).